The sequence spans 170 residues: Tubulin polymerization-promoting protein family member 2 (170 aa).

The interval 127 to 170 (TGTHKERFDESGKGKGIAGREEMTDNTGYVSGYKGSGTYDKKTK) is disordered. Residues 129–149 (THKERFDESGKGKGIAGREEM) are compositionally biased toward basic and acidic residues.

This sequence belongs to the TPPP family. Expressed in spermatids. Detected in liver cancer (at protein level).

Its subcellular location is the cytoplasm. It localises to the cytosol. It is found in the cell projection. The protein resides in the cilium. The protein localises to the flagellum. Its function is as follows. Probable regulator of microtubule dynamics required for sperm motility. In contrast to other members of the family, has no microtubule bundling activity. This Homo sapiens (Human) protein is Tubulin polymerization-promoting protein family member 2.